Reading from the N-terminus, the 105-residue chain is MKLTPVEQEKLLIFAAGELAKQRKARGVLLNYPEAAAYITCFIMEGARDGKGVAELMEAGRHVLTEKDVMEGVPEMLDSIQVEATFPDGVKLVTVHQPISAEVKS.

This sequence belongs to the urease gamma subunit family. As to quaternary structure, heterotrimer of UreA (gamma), UreB (beta) and UreC (alpha) subunits. Three heterotrimers associate to form the active enzyme.

Its subcellular location is the cytoplasm. It carries out the reaction urea + 2 H2O + H(+) = hydrogencarbonate + 2 NH4(+). The protein operates within nitrogen metabolism; urea degradation; CO(2) and NH(3) from urea (urease route): step 1/1. In Bacillus subtilis (strain 168), this protein is Urease subunit gamma.